The primary structure comprises 416 residues: Glutamyl-tRNA reductase (416 aa).

Residues Thr51 to Arg54, Ser110, Glu115 to Gln117, and Gln121 each bind substrate. The Nucleophile role is filled by Cys52. Gly190 to Gly195 is a binding site for NADP(+).

It belongs to the glutamyl-tRNA reductase family. As to quaternary structure, homodimer.

The catalysed reaction is (S)-4-amino-5-oxopentanoate + tRNA(Glu) + NADP(+) = L-glutamyl-tRNA(Glu) + NADPH + H(+). The protein operates within porphyrin-containing compound metabolism; protoporphyrin-IX biosynthesis; 5-aminolevulinate from L-glutamyl-tRNA(Glu): step 1/2. Catalyzes the NADPH-dependent reduction of glutamyl-tRNA(Glu) to glutamate 1-semialdehyde (GSA). This Francisella tularensis subsp. tularensis (strain FSC 198) protein is Glutamyl-tRNA reductase.